Consider the following 265-residue polypeptide: Chlorophyll a-b binding protein 1C, chloroplastic (265 aa).

A chloroplast-targeting transit peptide spans Met-1–Thr-34. The chain crosses the membrane as a helical span at residues Leu-151–Val-171. Chlorophyll b-binding residues include Val-152, Ser-156, Gln-164, Glu-172, Arg-175, and Leu-181. Residues Lys-212, Glu-213, Asn-216, Arg-218, Gln-230, His-245, and Ala-254 each contribute to the chlorophyll a site. The helical transmembrane segment at Leu-219 to Leu-239 threads the bilayer. Residue Phe-261 participates in chlorophyll b binding.

The protein belongs to the light-harvesting chlorophyll a/b-binding (LHC) protein family. The LHC complex consists of chlorophyll a-b binding proteins. Binds at least 14 chlorophylls (8 Chl-a and 6 Chl-b) and carotenoids such as lutein and neoxanthin. serves as cofactor. Post-translationally, photoregulated by reversible phosphorylation of its threonine residues.

It is found in the plastid. The protein resides in the chloroplast thylakoid membrane. Its function is as follows. The light-harvesting complex (LHC) functions as a light receptor, it captures and delivers excitation energy to photosystems with which it is closely associated. This Solanum lycopersicum (Tomato) protein is Chlorophyll a-b binding protein 1C, chloroplastic (CAB1C).